The primary structure comprises 703 residues: Phosphoribosylformylglycinamidine synthase subunit PurL (703 aa).

His-36 is an active-site residue. Residues Tyr-39 and Lys-80 each contribute to the ATP site. Glu-82 is a Mg(2+) binding site. Substrate contacts are provided by residues 83 to 86 and Arg-105; that span reads SHNH. Residue His-84 is the Proton acceptor of the active site. Asp-106 contacts Mg(2+). Residue Gln-226 coordinates substrate. Asp-252 is a binding site for Mg(2+). Residue 294–296 coordinates substrate; that stretch reads ETQ. Positions 468 and 505 each coordinate ATP. Position 508 (Ser-508) interacts with substrate.

The protein belongs to the FGAMS family. In terms of assembly, monomer. Part of the FGAM synthase complex composed of 1 PurL, 1 PurQ and 2 PurS subunits.

It localises to the cytoplasm. The enzyme catalyses N(2)-formyl-N(1)-(5-phospho-beta-D-ribosyl)glycinamide + L-glutamine + ATP + H2O = 2-formamido-N(1)-(5-O-phospho-beta-D-ribosyl)acetamidine + L-glutamate + ADP + phosphate + H(+). Its pathway is purine metabolism; IMP biosynthesis via de novo pathway; 5-amino-1-(5-phospho-D-ribosyl)imidazole from N(2)-formyl-N(1)-(5-phospho-D-ribosyl)glycinamide: step 1/2. Its function is as follows. Part of the phosphoribosylformylglycinamidine synthase complex involved in the purines biosynthetic pathway. Catalyzes the ATP-dependent conversion of formylglycinamide ribonucleotide (FGAR) and glutamine to yield formylglycinamidine ribonucleotide (FGAM) and glutamate. The FGAM synthase complex is composed of three subunits. PurQ produces an ammonia molecule by converting glutamine to glutamate. PurL transfers the ammonia molecule to FGAR to form FGAM in an ATP-dependent manner. PurS interacts with PurQ and PurL and is thought to assist in the transfer of the ammonia molecule from PurQ to PurL. The sequence is that of Phosphoribosylformylglycinamidine synthase subunit PurL from Sulfurisphaera tokodaii (strain DSM 16993 / JCM 10545 / NBRC 100140 / 7) (Sulfolobus tokodaii).